The following is a 310-amino-acid chain: HPr kinase/phosphorylase (310 aa).

Residues His-138 and Lys-159 contribute to the active site. 153–160 (GKSGVGKS) serves as a coordination point for ATP. Mg(2+) is bound at residue Ser-160. Residue Asp-177 is the Proton acceptor; for phosphorylation activity. Proton donor; for dephosphorylation activity of the active site. Positions 201-210 (LEIRGLGIIN) are important for the catalytic mechanism of both phosphorylation and dephosphorylation. Mg(2+) is bound at residue Glu-202. Residue Arg-243 is part of the active site. An important for the catalytic mechanism of dephosphorylation region spans residues 264 to 269 (PVRPGR).

Belongs to the HPrK/P family. In terms of assembly, homohexamer. Mg(2+) is required as a cofactor.

It carries out the reaction [HPr protein]-L-serine + ATP = [HPr protein]-O-phospho-L-serine + ADP + H(+). The enzyme catalyses [HPr protein]-O-phospho-L-serine + phosphate + H(+) = [HPr protein]-L-serine + diphosphate. Its function is as follows. Catalyzes the ATP- as well as the pyrophosphate-dependent phosphorylation of a specific serine residue in HPr, a phosphocarrier protein of the phosphoenolpyruvate-dependent sugar phosphotransferase system (PTS). HprK/P also catalyzes the pyrophosphate-producing, inorganic phosphate-dependent dephosphorylation (phosphorolysis) of seryl-phosphorylated HPr (P-Ser-HPr). The two antagonistic activities of HprK/P are regulated by several intracellular metabolites, which change their concentration in response to the absence or presence of rapidly metabolisable carbon sources (glucose, fructose, etc.) in the growth medium. Also phosphorylates/dephosphorylates the HPr-like catabolite repression protein crh on a specific serine residue. Therefore, by controlling the phosphorylation state of HPr and crh, HPrK/P is a sensor enzyme that plays a major role in the regulation of carbon metabolism and sugar transport: it mediates carbon catabolite repression (CCR), and regulates PTS-catalyzed carbohydrate uptake and inducer exclusion. In Bacillus pumilus (strain SAFR-032), this protein is HPr kinase/phosphorylase.